A 793-amino-acid polypeptide reads, in one-letter code: Serine/threonine-protein kinase MARK1 (793 aa).

Residues 1–40 (MSARTPLPTVNERDTENHTSVDGYTETHIPPTKSSSRQNI) are disordered. T5 carries the phosphothreonine modification. In terms of domain architecture, Protein kinase spans 60–311 (YRLQKTIGKG…LEQIMKDRWM (252 aa)). ATP-binding positions include 66-74 (IGKGNFAKV) and K89. The active-site Proton acceptor is D182. Residue T208 is modified to Phosphothreonine. T215 is subject to Phosphothreonine; by LKB1 and TAOK1. At S219 the chain carries Phosphoserine; by GSK3-beta. Positions 329–370 (DLNDAKRIDIMVTMGFARDEINDALVSQKYDEVMATYILLGR) constitute a UBA domain. Disordered stretches follow at residues 377 to 499 (GGES…GGSM) and 517 to 697 (LQNG…KPRS). Residues 380-403 (SLSSGNLCQRSRPSSDLNNSTLQS) show a composition bias toward polar residues. Phosphoserine is present on residues S382, S390, S393, S403, S423, and S444. Residues 447–459 (SEQKEEWDKDTAR) show a composition bias toward basic and acidic residues. The span at 462 to 473 (GSTTVGSKSEVT) shows a compositional bias: polar residues. Position 475 is a phosphoserine (S475). The span at 487–499 (AGPSNNVYSGGSM) shows a compositional bias: polar residues. 2 stretches are compositionally biased toward low complexity: residues 523–547 (SSLT…GPSA) and 585–599 (PAAS…ASTP). Phosphoserine is present on S588. T613 bears the Phosphothreonine; by PKC/PRKCZ mark. The span at 647–657 (GTSTGIISKIT) shows a compositional bias: polar residues. Composition is skewed to basic and acidic residues over residues 661–676 (VRRD…RTDT) and 683–695 (EPKD…EAKP). S666 carries the post-translational modification Phosphoserine. A KA1 domain is found at 744-793 (DARQDSLVQWEMEVCKLPRLSLNGVRFKRISGTSIAFKNIASKIANELKL).

The protein belongs to the protein kinase superfamily. CAMK Ser/Thr protein kinase family. SNF1 subfamily. In terms of assembly, interacts with MAPT/TAU. It depends on Mg(2+) as a cofactor. Post-translationally, phosphorylation at Thr-613 by PRKCZ/aPKC in polarized epithelial cells inhibits the kinase activity. Phosphorylated at Thr-215 by STK11/LKB1 in complex with STE20-related adapter-alpha (STRADA) pseudo kinase and CAB39. Phosphorylation at Thr-215 by TAOK1 activates the kinase activity, leading to phosphorylation and detachment of MAPT/TAU from microtubules. Phosphorylation at Ser-219 by GSK3-beta (GSK3B) inhibits the kinase activity. In terms of tissue distribution, highly expressed in brain and spleen and at lower levels in kidney and skeletal muscle.

Its subcellular location is the cell membrane. The protein localises to the cytoplasm. The protein resides in the cytoskeleton. It is found in the cell projection. It localises to the dendrite. The enzyme catalyses L-seryl-[protein] + ATP = O-phospho-L-seryl-[protein] + ADP + H(+). It catalyses the reaction L-threonyl-[protein] + ATP = O-phospho-L-threonyl-[protein] + ADP + H(+). The catalysed reaction is L-seryl-[tau protein] + ATP = O-phospho-L-seryl-[tau protein] + ADP + H(+). It carries out the reaction L-threonyl-[tau protein] + ATP = O-phospho-L-threonyl-[tau protein] + ADP + H(+). Its activity is regulated as follows. Activated by phosphorylation on Thr-215. Inhibited by phosphorylation at Ser-219. Its function is as follows. Serine/threonine-protein kinase. Involved in cell polarity and microtubule dynamics regulation. Phosphorylates DCX, MAP2 and MAP4. Phosphorylates the microtubule-associated protein MAPT/TAU. Involved in cell polarity by phosphorylating the microtubule-associated proteins MAP2, MAP4 and MAPT/TAU at KXGS motifs, causing detachment from microtubules, and their disassembly. Involved in the regulation of neuronal migration through its dual activities in regulating cellular polarity and microtubule dynamics, possibly by phosphorylating and regulating DCX. Also acts as a positive regulator of the Wnt signaling pathway, probably by mediating phosphorylation of dishevelled proteins (DVL1, DVL2 and/or DVL3). This is Serine/threonine-protein kinase MARK1 from Rattus norvegicus (Rat).